A 28-amino-acid chain; its full sequence is Dermaseptin-1 (28 aa).

Glutamine 28 is modified (glutamine amide).

In terms of tissue distribution, expressed by the skin glands.

The protein localises to the secreted. In terms of biological role, has antimicrobial activity. This is Dermaseptin-1 from Phyllomedusa tomopterna (Tiger-striped leaf frog).